We begin with the raw amino-acid sequence, 126 residues long: uncharacterized protein (126 aa).

Transmembrane regions (helical) follow at residues leucine 4–leucine 24, alanine 42–proline 62, and isoleucine 64–valine 84.

Its subcellular location is the membrane. This is an uncharacterized protein from Saccharomyces cerevisiae (strain ATCC 204508 / S288c) (Baker's yeast).